The chain runs to 465 residues: GTPase Der (465 aa).

EngA-type G domains are found at residues proline 3–glycine 167 and isoleucine 179–asparagine 352. GTP is bound by residues glycine 9–serine 16, aspartate 57–isoleucine 61, asparagine 119–aspartate 122, glycine 185–serine 192, aspartate 232–leucine 236, and asparagine 297–aspartate 300. The KH-like domain maps to lysine 353–threonine 437.

This sequence belongs to the TRAFAC class TrmE-Era-EngA-EngB-Septin-like GTPase superfamily. EngA (Der) GTPase family. As to quaternary structure, associates with the 50S ribosomal subunit.

Functionally, GTPase that plays an essential role in the late steps of ribosome biogenesis. The chain is GTPase Der from Stenotrophomonas maltophilia (strain R551-3).